A 614-amino-acid chain; its full sequence is Polyamine transporter 2 (614 aa).

The disordered stretch occupies residues 1-40 (MSDQESVVSFNSQNTSMVDVEGQQPQQYVPSKTNSRANQL). At 1 to 173 (MSDQESVVSF…WPSWVRWSYT (173 aa)) the chain is on the cytoplasmic side. A Phosphoserine modification is found at serine 50. A compositionally biased stretch (polar residues) spans 99-122 (RTASALSRTRTKQLNRTATNSSST). The interval 99–144 (RTASALSRTRTKQLNRTATNSSSTGKEEMEEEETEEREDQSGENEL) is disordered. A compositionally biased stretch (acidic residues) spans 126-144 (EMEEEETEEREDQSGENEL). Residues 174–194 (VLLSILVICVAYGSACISGGL) traverse the membrane as a helical segment. Residues 195 to 206 (GTVEKKYHVGME) are Extracellular-facing. A helical membrane pass occupies residues 207-227 (AAILSCSLMVIGFSLGPLIWS). Over 228-236 (PVSDLYGRR) the chain is Cytoplasmic. A helical transmembrane segment spans residues 237 to 257 (VAYFVSMGLYVIFNIPCALAP). Residues 258–266 (NLGCLLACR) are Extracellular-facing. A helical transmembrane segment spans residues 267-287 (FLCGVWSSSGLCLVGGSIADM). Residues 288 to 297 (FPSETRGKAI) lie on the Cytoplasmic side of the membrane. Residues 298 to 318 (AFFAFAPYVGPVVGPLVNGFI) traverse the membrane as a helical segment. The Extracellular segment spans residues 319-326 (SVSTGRMD). A helical membrane pass occupies residues 327–347 (LIFWVNMAFAGVMWIISSAIP). Topologically, residues 348–407 (ETYAPVILKRKAARLRKETGNPKIMTEQEAQGVSMSEMMRACLLRPLYFAVTEPVLVATC) are cytoplasmic. Residues 408–428 (FYVCLIYSLLYAFFFAFPVIF) form a helical membrane-spanning segment. The Extracellular portion of the chain corresponds to 429 to 437 (GELYGYKDN). Residues 438–458 (LVGLMFIPIVIGALWALATTF) traverse the membrane as a helical segment. The Cytoplasmic portion of the chain corresponds to 459-478 (YCENKYLQIVKQRKPTPEDR). The chain crosses the membrane as a helical span at residues 479–499 (LLGAKIGAPFAAIALWILGAT). Residues 500-503 (AYKH) are Extracellular-facing. The chain crosses the membrane as a helical span at residues 504–524 (IIWVGPASAGLAFGFGMVLIY). Residues 525–541 (YSLNNYIIDCYVQYASS) lie on the Cytoplasmic side of the membrane. A helical membrane pass occupies residues 542-562 (ALATKVFLRSAGGAAFPLFTI). Residues 563–574 (QMYHKLNLHWGS) lie on the Extracellular side of the membrane. Residues 575–595 (WLLAFISTAMIALPFAFSYWG) traverse the membrane as a helical segment. The Cytoplasmic portion of the chain corresponds to 596-614 (KGLRHKLSKKDYSIDSVEM).

It belongs to the major facilitator superfamily. DHA1 family. Polyamines/proton antiporter (TC 2.A.1.2.16) subfamily.

The protein resides in the cell membrane. Its function is as follows. Cell membrane polyamine/proton antiporter, involved in the detoxification of excess polyamines in the cytoplasm. Recognizes spermine, but not spermidine. This Saccharomyces cerevisiae (strain ATCC 204508 / S288c) (Baker's yeast) protein is Polyamine transporter 2 (TPO2).